Consider the following 307-residue polypeptide: Nicotinamide/nicotinic acid mononucleotide adenylyltransferase 2 (307 aa).

2 residues coordinate NAD(+): Ser-16 and Phe-17. ATP is bound at residue His-24. NAD(+) contacts are provided by Trp-92 and Thr-95. S-palmitoyl cysteine attachment occurs at residues Cys-164 and Cys-165. The NAD(+) site is built by Gly-200, Asp-202, Leu-212, Trp-213, and Arg-232. 271–274 (TKSR) contributes to the ATP binding site.

This sequence belongs to the eukaryotic NMN adenylyltransferase family. As to quaternary structure, monomer. Requires Mg(2+) as cofactor. In terms of processing, degraded in response to injured neurite. Degradation is caused by polyubiquitination by MYCBP2 after recognition by FBXO45. Post-translationally, palmitoylated; palmitoylation is required for membrane association.

Its subcellular location is the golgi apparatus membrane. It localises to the cytoplasmic vesicle membrane. The protein resides in the cytoplasm. It is found in the cell projection. The protein localises to the axon. It catalyses the reaction beta-nicotinamide D-ribonucleotide + ATP + H(+) = diphosphate + NAD(+). It carries out the reaction nicotinate beta-D-ribonucleotide + ATP + H(+) = deamido-NAD(+) + diphosphate. It functions in the pathway cofactor biosynthesis; NAD(+) biosynthesis; NAD(+) from nicotinamide D-ribonucleotide: step 1/1. Its pathway is cofactor biosynthesis; NAD(+) biosynthesis; deamido-NAD(+) from nicotinate D-ribonucleotide: step 1/1. Its activity is regulated as follows. Inhibited by P1-(adenosine-5')-P3-(nicotinamide-riboside-5')-triphosphate (Np3AD) and P1-(adenosine-5')-P4-(nicotinamide-riboside-5')-tetraphosphate (Np4AD). In terms of biological role, nicotinamide/nicotinate-nucleotide adenylyltransferase that acts as an axon maintenance factor. Axon survival factor required for the maintenance of healthy axons: acts by delaying Wallerian axon degeneration, an evolutionarily conserved process that drives the loss of damaged axons. Catalyzes the formation of NAD(+) from nicotinamide mononucleotide (NMN) and ATP. Can also use the deamidated form; nicotinic acid mononucleotide (NaMN) as substrate but with a lower efficiency. Cannot use triazofurin monophosphate (TrMP) as substrate. Also catalyzes the reverse reaction, i.e. the pyrophosphorolytic cleavage of NAD(+). For the pyrophosphorolytic activity prefers NAD(+), NADH and NaAD as substrates and degrades nicotinic acid adenine dinucleotide phosphate (NHD) less effectively. Fails to cleave phosphorylated dinucleotides NADP(+), NADPH and NaADP(+). Also acts as an activator of ADP-ribosylation by supporting the catalytic activity of PARP16 and promoting mono-ADP-ribosylation of ribosomes by PARP16. May be involved in the maintenance of axonal integrity. The chain is Nicotinamide/nicotinic acid mononucleotide adenylyltransferase 2 (NMNAT2) from Pongo abelii (Sumatran orangutan).